Here is a 391-residue protein sequence, read N- to C-terminus: MSLNPRDVVIVDFGRTPMGRSKGGMHRNTRAEDMSAHLISKLLERNDKVDPKEVEDVIWGCVNQTLEQGWNIARMASLMTQIPHTSAAQTVSRLCGSSMSALHTAAQAIMTGNGDVFVVGGVEHMGHVSMMHGVDPNPHLSLHAAKASGMMGLTAEMLGKMHGITREQQDLFGLRSHQLAHKATVEGKFKDEIIPMQGYDENGFLKVFDFDETIRPETTLEGLASLKPAFNPKGGTVTAGTSSQITDGASCMVVMSGQRAMDLGIQPLAVIRSMAVAGVDPAIMGYGPVPSTQKALKRAGLTMADIDFIELNEAFAAQALPVLKDLKVLDKMDEKVNLHGGAIALGHPFGCSGARISGTLLNVMKQNGGTLGVATMCVGLGQGITTVFERI.

Cys95 functions as the Acyl-thioester intermediate in the catalytic mechanism. Residues His347 and Cys377 each act as proton acceptor in the active site.

The protein belongs to the thiolase-like superfamily. Thiolase family. As to quaternary structure, heterotetramer of two alpha chains (FadB) and two beta chains (FadA).

Its subcellular location is the cytoplasm. The catalysed reaction is an acyl-CoA + acetyl-CoA = a 3-oxoacyl-CoA + CoA. It functions in the pathway lipid metabolism; fatty acid beta-oxidation. Functionally, catalyzes the final step of fatty acid oxidation in which acetyl-CoA is released and the CoA ester of a fatty acid two carbons shorter is formed. The polypeptide is 3-ketoacyl-CoA thiolase (Ectopseudomonas oleovorans (Pseudomonas oleovorans)).